The primary structure comprises 511 residues: 2-methylbutanal oxime monooxygenase (511 aa).

2 consecutive transmembrane segments (helical) span residues 10-30 (PPQWLSILAVFLLPILTLLLF) and 304-324 (ILMNVFVGGIDTSAVTITWAF). C451 contributes to the heme binding site.

Belongs to the cytochrome P450 family. It depends on heme as a cofactor. Expressed in storage roots, primary roots, petioles and vascular tissues. Expressed in the outer cortex cells, the endodermis and around the xylem, phloem cells and laticifers.

The protein resides in the microsome membrane. The catalysed reaction is (1E,2S)-2-methylbutanal oxime + reduced [NADPH--hemoprotein reductase] + O2 = 2-hydroxy-2-methylbutanenitrile + oxidized [NADPH--hemoprotein reductase] + 2 H2O + H(+). It carries out the reaction (E)-2-methylpropanal oxime + reduced [NADPH--hemoprotein reductase] + O2 = 2-hydroxy-2-methylpropanenitrile + oxidized [NADPH--hemoprotein reductase] + 2 H2O + H(+). Functionally, catalyzes the conversion of (E)-2-methylpropanal oxime (valox) to 2-hydroxy-2-methylpropanenitrile (acetone cyanohydrin) and of (E)-2-methylbutanal oxime (ilox) to 2-hydroxy-2-methylbutyronitrile. The reaction takes place in three steps. First, the oxime is isomerized to the (Z)- isomer, next the (Z)-isomer is dehydrated to the corresponding nitrile, followed by a C-hydroxylation of the nitrile. Can use both aliphatic and aromatic oximes as substrates. This chain is 2-methylbutanal oxime monooxygenase (CYP71E7), found in Manihot esculenta (Cassava).